The chain runs to 577 residues: Zona pellucida sperm-binding protein 3 receptor (577 aa).

Positions 1 to 32 are cleaved as a signal peptide; the sequence is MTAWSLHELWKTSHSTLFQVTLATVLMAPVLG. Sushi domains are found at residues 33-92, 93-154, 155-219, 220-279, 280-346, and 347-412; these read DCGP…FCAR, KRCK…ECVI, ATCE…ACEK, IVCH…TCEP, NGCI…GCER, and VCCP…SCEA. Disulfide bonds link C34–C78, C64–C90, C95–C136, C122–C152, C157–C200, C186–C217, C222–C264, C250–C277, C282–C332, C316–C344, C349–C397, and C382–C410. 2 N-linked (GlcNAc...) asparagine glycosylation sites follow: N72 and N81. N-linked (GlcNAc...) asparagine glycosylation is found at N144, N195, and N204. Residue N335 is glycosylated (N-linked (GlcNAc...) asparagine). N-linked (GlcNAc...) asparagine glycosylation is found at N426, N431, N434, N443, N462, N475, and N497. A Sushi 7 domain is found at 451 to 509; that stretch reads AVCPKPEIINGNLSVEKEIYAEMENITIQCDSGYDLVGSSNIICLENRTWYPDIPFCIM. 2 disulfide bridges follow: C453-C494 and C480-C507.

In terms of assembly, homomultimer; disulfide-linked. Glycosylated. As to expression, testis specific.

The protein localises to the cytoplasmic vesicle. It localises to the secretory vesicle. The protein resides in the acrosome lumen. Binds to ZP3 glycoprotein in egg zona pellucida. Probably involved in interactions between sperm acrosome and egg zona pellucida during and immediately following the acrosome reaction. The polypeptide is Zona pellucida sperm-binding protein 3 receptor (Zp3r) (Rattus norvegicus (Rat)).